Here is a 117-residue protein sequence, read N- to C-terminus: Large ribosomal subunit protein bL19 (117 aa).

The protein belongs to the bacterial ribosomal protein bL19 family.

Functionally, this protein is located at the 30S-50S ribosomal subunit interface and may play a role in the structure and function of the aminoacyl-tRNA binding site. The chain is Large ribosomal subunit protein bL19 from Micrococcus luteus (strain ATCC 4698 / DSM 20030 / JCM 1464 / CCM 169 / CCUG 5858 / IAM 1056 / NBRC 3333 / NCIMB 9278 / NCTC 2665 / VKM Ac-2230) (Micrococcus lysodeikticus).